Reading from the N-terminus, the 338-residue chain is Fructose-bisphosphate aldolase (338 aa).

Substrate is bound by residues Arg50 and Lys138. Catalysis depends on Glu179, which acts as the Proton acceptor. Catalysis depends on Lys221, which acts as the Schiff-base intermediate with dihydroxyacetone-P.

This sequence belongs to the class I fructose-bisphosphate aldolase family.

It carries out the reaction beta-D-fructose 1,6-bisphosphate = D-glyceraldehyde 3-phosphate + dihydroxyacetone phosphate. It functions in the pathway carbohydrate degradation; glycolysis; D-glyceraldehyde 3-phosphate and glycerone phosphate from D-glucose: step 4/4. The protein is Fructose-bisphosphate aldolase of Encephalitozoon cuniculi (strain GB-M1) (Microsporidian parasite).